An 83-amino-acid polypeptide reads, in one-letter code: MAKNRVLTIFYCTIYYCICFKYVLLGMVVEKTQGHICHDYLEGDHCDPKDCNLDCRDKWKGTGTCEPPTGTPLTRTCYCTYDC.

An N-terminal signal peptide occupies residues methionine 1–glycine 34. Cystine bridges form between cysteine 37/cysteine 83, cysteine 46/cysteine 65, cysteine 51/cysteine 77, and cysteine 55/cysteine 79.

The protein belongs to the DEFL family.

The protein localises to the secreted. This chain is Putative defensin-like protein 131 (LCR29), found in Arabidopsis thaliana (Mouse-ear cress).